We begin with the raw amino-acid sequence, 71 residues long: Protein SlyX homolog (71 aa).

The interval 52-71 (RLDQAESSAGAPANERPPHY) is disordered.

Belongs to the SlyX family.

This is Protein SlyX homolog from Rhodopseudomonas palustris (strain ATCC BAA-98 / CGA009).